The chain runs to 173 residues: Putative C-type lectin protein FPV198 (173 aa).

The region spanning 50–169 (GMSGWVQINN…CNKKHTGICF (120 aa)) is the C-type lectin domain.

In Vertebrata (FPV), this protein is Putative C-type lectin protein FPV198.